Here is a 798-residue protein sequence, read N- to C-terminus: Cadherin-20 (798 aa).

Residues M1 to G35 form the signal peptide. A propeptide spanning residues S36 to R58 is cleaved from the precursor. Residue N47 is glycosylated (N-linked (GlcNAc...) asparagine). Over S59–R618 the chain is Extracellular. Cadherin domains are found at residues W60–F164, L165–F273, P274–F392, E389–F493, and F493–S615. Positions R88 to D90 match the Cell attachment site motif. N-linked (GlcNAc...) asparagine glycosylation is present at N260. Residues N419, N460, and N541 are each glycosylated (N-linked (GlcNAc...) asparagine). A helical transmembrane segment spans residues G619–L639. Over S640–W798 the chain is Cytoplasmic.

As to expression, detected in embryonic spinal cord, in the brachial and lumbar section of motor neurons (at protein level). Detected in ventro-lateral portion of embryonic spinal cord, in the brachial and lumbar section of embryonic motor neurons. Detected in embryonic adductor motor neurons and embryonic dorsal root ganglion. Detected in the caudal half of newly generated somites and in presomitic mesoderm.

The protein localises to the cell membrane. Its function is as follows. Cadherins are calcium-dependent cell adhesion proteins. They preferentially interact with themselves in a homophilic manner in connecting cells; cadherins may thus contribute to the sorting of heterogeneous cell types. The protein is Cadherin-20 (CDH20) of Gallus gallus (Chicken).